A 163-amino-acid chain; its full sequence is Nucleotide-binding protein cbdbA1256 (163 aa).

The protein belongs to the YajQ family.

In terms of biological role, nucleotide-binding protein. This chain is Nucleotide-binding protein cbdbA1256, found in Dehalococcoides mccartyi (strain CBDB1).